The primary structure comprises 283 residues: MAVYAVGDLQGCLDPLKCLLERVAFDPAKDRLWLVGDLVNRGPQSLETLRFLYAMRESVVSVLGNHDLHLLAVAHKSERLKKSDTLREILEAPDREPLLDWLRRLPLLHYDEQRKVALVHAGIPPQWSLEKARLRAAEVEQALRDDQRLPLFLDGMYGNEPAKWDKKLHGIDRLRVITNYFTRMRFCTEDGKLDLKSKEGLDTAPPGYAPWFSFPSRKTRGEKIIFGHWAALEGHCDEPGLFALDTGCVWGARMTLLNVDSGERLSCDCAEQRAPARPAATPA.

Belongs to the Ap4A hydrolase family.

It carries out the reaction P(1),P(4)-bis(5'-adenosyl) tetraphosphate + H2O = 2 ADP + 2 H(+). In terms of biological role, hydrolyzes diadenosine 5',5'''-P1,P4-tetraphosphate to yield ADP. In Pseudomonas aeruginosa (strain LESB58), this protein is Bis(5'-nucleosyl)-tetraphosphatase, symmetrical.